The chain runs to 102 residues: RNA-binding protein Hfq (102 aa).

A Sm domain is found at Asp9–Val68. Residues Val63–Glu102 are disordered. The segment covering His70–Glu102 has biased composition (low complexity).

The protein belongs to the Hfq family. As to quaternary structure, homohexamer.

Functionally, RNA chaperone that binds small regulatory RNA (sRNAs) and mRNAs to facilitate mRNA translational regulation in response to envelope stress, environmental stress and changes in metabolite concentrations. Also binds with high specificity to tRNAs. The sequence is that of RNA-binding protein Hfq from Erwinia tasmaniensis (strain DSM 17950 / CFBP 7177 / CIP 109463 / NCPPB 4357 / Et1/99).